A 178-amino-acid polypeptide reads, in one-letter code: V-type proton ATPase subunit c''2 (178 aa).

Residues methionine 1–serine 24 lie on the Lumenal side of the membrane. The chain crosses the membrane as a helical span at residues alanine 25–isoleucine 45. The Cytoplasmic portion of the chain corresponds to threonine 46–asparagine 64. A helical transmembrane segment spans residues leucine 65 to leucine 85. Residues glutamine 86–alanine 108 lie on the Lumenal side of the membrane. The chain crosses the membrane as a helical span at residues isoleucine 109–isoleucine 129. Over isoleucine 130 to lysine 147 the chain is Cytoplasmic. Residues isoleucine 148–isoleucine 168 traverse the membrane as a helical segment. The Lumenal segment spans residues methionine 169–lysine 178.

It belongs to the V-ATPase proteolipid subunit family. In terms of assembly, V-ATPase is a heteromultimeric enzyme composed of a peripheral catalytic V1 complex (components A to H) attached to an integral membrane V0 proton pore complex (components: a, c, c'', d and e). The proteolipid components c and c'' are present as a hexameric ring that forms the proton-conducting pore. Interacts with APD2.

It localises to the endoplasmic reticulum membrane. The protein localises to the golgi apparatus membrane. In terms of biological role, proton-conducting pore forming subunit of the membrane integral V0 complex of vacuolar ATPase. V-ATPase is responsible for acidifying a variety of intracellular compartments in eukaryotic cells. This Arabidopsis thaliana (Mouse-ear cress) protein is V-type proton ATPase subunit c''2 (VHA-c''2).